A 762-amino-acid polypeptide reads, in one-letter code: Endonuclease MutS2 (762 aa).

The tract at residues 1–22 (MSDAPKRSLNPTLMMNNNNTPP) is disordered. Low complexity predominate over residues 9–20 (LNPTLMMNNNNT). 333–340 (GVNAGGKT) lines the ATP pocket. The region spanning 688 to 762 (LDLRGQRSEE…GGSGVKIVKL (75 aa)) is the Smr domain.

It belongs to the DNA mismatch repair MutS family. MutS2 subfamily. As to quaternary structure, homodimer. Binds to stalled ribosomes, contacting rRNA.

Its activity is regulated as follows. ATPase activity is stimulated by DNA. Its function is as follows. Endonuclease that is involved in the suppression of homologous recombination and may thus have a key role in the control of bacterial genetic diversity. Also involved in repairing oxidative DNA damage. Has ATPase activity. Binds DNA. Endonuclease that is involved in the suppression of homologous recombination and thus may have a key role in the control of bacterial genetic diversity. In terms of biological role, acts as a ribosome collision sensor, splitting the ribosome into its 2 subunits. Detects stalled/collided 70S ribosomes which it binds and splits by an ATP-hydrolysis driven conformational change. Acts upstream of the ribosome quality control system (RQC), a ribosome-associated complex that mediates the extraction of incompletely synthesized nascent chains from stalled ribosomes and their subsequent degradation. Probably generates substrates for RQC. This Helicobacter pylori (strain ATCC 700392 / 26695) (Campylobacter pylori) protein is Endonuclease MutS2.